The chain runs to 154 residues: D-aminoacyl-tRNA deacylase (154 aa).

A Gly-cisPro motif, important for rejection of L-amino acids motif is present at residues Gly142–Pro143.

It belongs to the DTD family. Homodimer.

The protein resides in the cytoplasm. It carries out the reaction glycyl-tRNA(Ala) + H2O = tRNA(Ala) + glycine + H(+). It catalyses the reaction a D-aminoacyl-tRNA + H2O = a tRNA + a D-alpha-amino acid + H(+). An aminoacyl-tRNA editing enzyme that deacylates mischarged D-aminoacyl-tRNAs. Also deacylates mischarged glycyl-tRNA(Ala), protecting cells against glycine mischarging by AlaRS. Acts via tRNA-based rather than protein-based catalysis; rejects L-amino acids rather than detecting D-amino acids in the active site. By recycling D-aminoacyl-tRNA to D-amino acids and free tRNA molecules, this enzyme counteracts the toxicity associated with the formation of D-aminoacyl-tRNA entities in vivo and helps enforce protein L-homochirality. In Polaromonas naphthalenivorans (strain CJ2), this protein is D-aminoacyl-tRNA deacylase.